The chain runs to 1770 residues: Transposon Ty2-DR2 Gag-Pol polyprotein (1770 aa).

2 stretches are compositionally biased toward polar residues: residues 1–39 (MESQQLHQNPHSQHGSAYASVTSKEVPSNQDPLAVSASN) and 49–60 (KVNSQEETTPGT). Disordered stretches follow at residues 1–89 (MESQ…QQHG) and 360–449 (HSEY…SNDE). The segment at 295–397 (ENNINVSDRL…SSKPRAAKAH (103 aa)) is RNA-binding. The segment covering 369–381 (TSPNTTNTKVTTR) has biased composition (low complexity). 2 stretches are compositionally biased toward polar residues: residues 399-408 (IATSSKFSRV) and 415-435 (ESTVSSQYLSDDNELSLGQQQ). The active-site For protease activity; shared with dimeric partner is Asp-457. The segment at 579–636 (NVNKSKSVNKYPYPLIHRMLGHANFRSIQKSLKKNAVTYLKESDIEWSNASTYQCPDC) is integrase-type zinc finger-like. The region spanning 656 to 831 (ESYEPFQYLH…AGLDITTILP (176 aa)) is the Integrase catalytic domain. Positions 667 and 732 each coordinate Mg(2+). Disordered stretches follow at residues 1005 to 1038 (GGTIESDTTSPRHSSTFTARNQKRPGSPNDMIDL), 1059 to 1135 (TEEP…KSSK), and 1171 to 1222 (SRQT…LEPP). 2 stretches are compositionally biased toward polar residues: residues 1009–1024 (ESDTTSPRHSSTFTAR) and 1065–1082 (QRNSDTNIKYRTTNSTPS). Residues 1193–1227 (KKRSLEDNETEIEVSRDTWNNKNMRSLEPPRSKKR) carry the Bipartite nuclear localization signal motif. The region spanning 1353–1491 (NDYYITQLDI…DILGLEIKYQ (139 aa)) is the Reverse transcriptase Ty1/copia-type domain. Asp-1361, Asp-1442, Asp-1443, Asp-1625, Glu-1667, and Asp-1700 together coordinate Mg(2+). The region spanning 1625–1767 (DASYGNQPYY…IKTFKLLTNK (143 aa)) is the RNase H Ty1/copia-type domain.

As to quaternary structure, the capsid protein forms a homotrimer, from which the VLPs are assembled. The protease is a homodimer, whose active site consists of two apposed aspartic acid residues. In terms of processing, initially, virus-like particles (VLPs) are composed of the structural unprocessed proteins Gag and Gag-Pol, and also contain the host initiator methionine tRNA (tRNA(i)-Met) which serves as a primer for minus-strand DNA synthesis, and a dimer of genomic Ty RNA. Processing of the polyproteins occurs within the particle and proceeds by an ordered pathway, called maturation. First, the protease (PR) is released by autocatalytic cleavage of the Gag-Pol polyprotein, and this cleavage is a prerequisite for subsequent processing at the remaining sites to release the mature structural and catalytic proteins. Maturation takes place prior to the RT reaction and is required to produce transposition-competent VLPs.

Its subcellular location is the cytoplasm. The protein localises to the nucleus. It carries out the reaction DNA(n) + a 2'-deoxyribonucleoside 5'-triphosphate = DNA(n+1) + diphosphate. It catalyses the reaction Endonucleolytic cleavage to 5'-phosphomonoester.. Its function is as follows. Capsid protein (CA) is the structural component of the virus-like particle (VLP), forming the shell that encapsulates the retrotransposons dimeric RNA genome. The particles are assembled from trimer-clustered units and there are holes in the capsid shells that allow for the diffusion of macromolecules. CA also has nucleocapsid-like chaperone activity, promoting primer tRNA(i)-Met annealing to the multipartite primer-binding site (PBS), dimerization of Ty2 RNA and initiation of reverse transcription. The aspartyl protease (PR) mediates the proteolytic cleavages of the Gag and Gag-Pol polyproteins after assembly of the VLP. In terms of biological role, reverse transcriptase/ribonuclease H (RT) is a multifunctional enzyme that catalyzes the conversion of the retro-elements RNA genome into dsDNA within the VLP. The enzyme displays a DNA polymerase activity that can copy either DNA or RNA templates, and a ribonuclease H (RNase H) activity that cleaves the RNA strand of RNA-DNA heteroduplexes during plus-strand synthesis and hydrolyzes RNA primers. The conversion leads to a linear dsDNA copy of the retrotransposon that includes long terminal repeats (LTRs) at both ends. Functionally, integrase (IN) targets the VLP to the nucleus, where a subparticle preintegration complex (PIC) containing at least integrase and the newly synthesized dsDNA copy of the retrotransposon must transit the nuclear membrane. Once in the nucleus, integrase performs the integration of the dsDNA into the host genome. This Saccharomyces cerevisiae (strain ATCC 204508 / S288c) (Baker's yeast) protein is Transposon Ty2-DR2 Gag-Pol polyprotein (TY2B-DR2).